A 115-amino-acid polypeptide reads, in one-letter code: MKLDISVKYLLKSLIPILIILTVFYLGWKDNQENARMFYAFIGCIISAITFPFSMRIIQKMVIRFTGKEFWQKDFFTNPVGGSLTAIFELFCFVISVPVVAIYLIFILCKALSGK.

3 consecutive transmembrane segments (helical) span residues 7–27 (VKYL…FYLG), 38–58 (FYAF…MRII), and 87–107 (IFEL…LIFI).

Its subcellular location is the cell membrane. Its function is as follows. This protein is able to protect a cell, which harbors the plasmid IncI1 ColIb-P9 encoding colicin Ib, against colicin Ib. The protein is Colicin-Ib immunity protein of Escherichia coli.